The sequence spans 422 residues: Nuclear hormone receptor family member nhr-54 (422 aa).

The nuclear receptor DNA-binding region spans 14 to 92; that stretch reads SVKCAICYKA…LGMTTENVRT (79 aa). 2 NR C4-type zinc fingers span residues 17-37 and 53-80; these read CAIC…CRAC and CTRK…FKKC. Residues 161–422 form the NR LBD domain; sequence PDDDVIVELN…VFTEPEFFRV (262 aa).

It belongs to the nuclear hormone receptor family.

The protein localises to the nucleus. Its function is as follows. Orphan nuclear receptor. In Caenorhabditis elegans, this protein is Nuclear hormone receptor family member nhr-54 (nhr-54).